Here is a 184-residue protein sequence, read N- to C-terminus: Lactoylglutathione lyase (184 aa).

At alanine 2 the chain carries N-acetylalanine. A disulfide bridge connects residues cysteine 19 and cysteine 20. The VOC domain occupies 31–177 (LLQQTMLRVK…DGYWIEILNP (147 aa)). Residues glutamine 34 and arginine 38 each contribute to the substrate site. Glutamine 34 provides a ligand contact to Zn(2+). A disulfide bridge links cysteine 61 with cysteine 139. Lysine 88 carries the post-translational modification N6-succinyllysine. Glutamate 100 contributes to the Zn(2+) binding site. Position 104 (asparagine 104) interacts with substrate. Threonine 107 carries the post-translational modification Phosphothreonine. 2 residues coordinate substrate: arginine 123 and histidine 127. Histidine 127 is a binding site for Zn(2+). At cysteine 139 the chain carries S-glutathionyl cysteine; alternate. Lysine 148 carries the post-translational modification N6-acetyllysine; alternate. At lysine 148 the chain carries N6-succinyllysine; alternate. A substrate-binding site is contributed by 157–158 (KM). Glutamate 173 provides a ligand contact to Zn(2+). Glutamate 173 functions as the Proton donor/acceptor in the catalytic mechanism.

Belongs to the glyoxalase I family. Homodimer. It depends on Zn(2+) as a cofactor. Post-translationally, glutathionylation at Cys-139 inhibits enzyme activity. In terms of processing, phosphorylated at Thr-107 in the presence of CaMK2. However, this is a consensus site for phosphorylation by CK2 so phosphorylation may be mediated by CK2 rather than CaMK2. Phosphorylation is induced by TNF and suppresses the TNF-induced transcriptional activity of NF-kappa-B. Exists in a nitric oxide (NO)-modified form. The exact nature of the modification is unknown, but it suppresses the TNF-induced transcriptional activity of NF-kappa-B.

The catalysed reaction is (R)-S-lactoylglutathione = methylglyoxal + glutathione. The protein operates within secondary metabolite metabolism; methylglyoxal degradation; (R)-lactate from methylglyoxal: step 1/2. Its activity is regulated as follows. Regulated by oxidation of Cys-139 in response to the redox state of the cell. Results in the alternative formation of cystine or glutathione-bound cysteine, the latter modification leading to reduced enzyme activity. Its function is as follows. Catalyzes the conversion of hemimercaptal, formed from methylglyoxal and glutathione, to S-lactoylglutathione. Involved in the regulation of TNF-induced transcriptional activity of NF-kappa-B. Required for normal osteoclastogenesis. The sequence is that of Lactoylglutathione lyase (GLO1) from Homo sapiens (Human).